A 212-amino-acid polypeptide reads, in one-letter code: Pyridoxine/pyridoxamine 5'-phosphate oxidase (212 aa).

Substrate-binding positions include 8–11 and Lys-66; that span reads RREY. FMN-binding positions include 61 to 66, 76 to 77, Arg-82, Lys-83, and Gln-105; these read RIVLLK and FT. 3 residues coordinate substrate: Tyr-123, Arg-127, and Ser-131. FMN contacts are provided by residues 140–141 and Trp-185; that span reads QS. 191 to 193 is a substrate binding site; the sequence is RLH. Arg-195 contacts FMN.

The protein belongs to the pyridoxamine 5'-phosphate oxidase family. In terms of assembly, homodimer. Requires FMN as cofactor.

The catalysed reaction is pyridoxamine 5'-phosphate + O2 + H2O = pyridoxal 5'-phosphate + H2O2 + NH4(+). It carries out the reaction pyridoxine 5'-phosphate + O2 = pyridoxal 5'-phosphate + H2O2. It functions in the pathway cofactor metabolism; pyridoxal 5'-phosphate salvage; pyridoxal 5'-phosphate from pyridoxamine 5'-phosphate: step 1/1. It participates in cofactor metabolism; pyridoxal 5'-phosphate salvage; pyridoxal 5'-phosphate from pyridoxine 5'-phosphate: step 1/1. Its function is as follows. Catalyzes the oxidation of either pyridoxine 5'-phosphate (PNP) or pyridoxamine 5'-phosphate (PMP) into pyridoxal 5'-phosphate (PLP). This chain is Pyridoxine/pyridoxamine 5'-phosphate oxidase, found in Shewanella sp. (strain ANA-3).